The primary structure comprises 687 residues: Guanine-nucleotide exchange factor YEL1 (687 aa).

Residues 14–27 (YGVSQKGYNDNFSE) show a composition bias toward polar residues. Disordered regions lie at residues 14–35 (YGVS…LHGS) and 63–97 (AAND…TDQN). The SEC7 domain maps to 57 to 264 (ILQNKEAAND…SEYYKTLNET (208 aa)). The segment covering 73–83 (TTDTATAGTGT) has biased composition (low complexity). T290 carries the phosphothreonine modification. Phosphoserine occurs at positions 293 and 299. One can recognise a PH domain in the interval 412-551 (ASRRTSLSYL…DCINFWAGRI (140 aa)).

The protein belongs to the YEL1 family.

The protein resides in the cytoplasm. The protein localises to the cell membrane. It localises to the bud neck. It is found in the bud tip. Guanine nucleotide exchange factor for ARF3 required for localization of ARF3 to the bud neck and tip and involved in actin patch polarization. In Saccharomyces cerevisiae (strain RM11-1a) (Baker's yeast), this protein is Guanine-nucleotide exchange factor YEL1 (YEL1).